The sequence spans 259 residues: MKYKIFASTTPQTEPVLQKLKQVLKGCEAVEKGFDYLFVLGGDGFFVSTVANYNCHNCRVVGINTGHLGFYTSFNEKDLDDNFLQKLQQCHFQRISLLEVSVNGQQHLVLNELAVYTNTAYPINIFIDGEAWEFYRGSGLLIGPRTGSTALAKSAKGAVIFPGIDVLQIIEMNPLLHPNQVTIQSPIILPKETQVEFVVKKAFNPQQFPTFYCDGRKLELPNADTTLALKLVQSTPMFNISLKTQDFINKLKSTFIKQS.

D43 serves as the catalytic Proton acceptor. NAD(+) is bound by residues 43–44 (DG), 111–112 (NE), and R136.

Belongs to the NAD kinase family. The cofactor is a divalent metal cation.

It localises to the cytoplasm. The enzyme catalyses NAD(+) + ATP = ADP + NADP(+) + H(+). Involved in the regulation of the intracellular balance of NAD and NADP, and is a key enzyme in the biosynthesis of NADP. Catalyzes specifically the phosphorylation on 2'-hydroxyl of the adenosine moiety of NAD to yield NADP. The polypeptide is NAD kinase (Mycoplasma pneumoniae (strain ATCC 29342 / M129 / Subtype 1) (Mycoplasmoides pneumoniae)).